The primary structure comprises 152 residues: Phosphopantetheine adenylyltransferase (152 aa).

S9 serves as a coordination point for substrate. ATP contacts are provided by residues 9–10 and H17; that span reads SF. Substrate contacts are provided by K41, T73, and R87. Residues 88-90, E98, and 122-128 each bind ATP; these read GLR and TSFISSS.

Belongs to the bacterial CoaD family. As to quaternary structure, homohexamer. Mg(2+) serves as cofactor.

The protein resides in the cytoplasm. It catalyses the reaction (R)-4'-phosphopantetheine + ATP + H(+) = 3'-dephospho-CoA + diphosphate. It participates in cofactor biosynthesis; coenzyme A biosynthesis; CoA from (R)-pantothenate: step 4/5. Functionally, reversibly transfers an adenylyl group from ATP to 4'-phosphopantetheine, yielding dephospho-CoA (dPCoA) and pyrophosphate. The protein is Phosphopantetheine adenylyltransferase of Flavobacterium johnsoniae (strain ATCC 17061 / DSM 2064 / JCM 8514 / BCRC 14874 / CCUG 350202 / NBRC 14942 / NCIMB 11054 / UW101) (Cytophaga johnsonae).